The following is a 272-amino-acid chain: MVIWRRYLSGTAQPLVFKKMNKALAQAAPREHVVRRLEQPVGMPQPPTAATRYVEGNSMLDMFSEEKTSRRAAELAAEFSKSGLYDAATFRKTNGRVFLPPASYWRAEHARYFPHLGGRTLTGARGSVEDVLAGKVSVVKVFSCETGEGLASSYFRHEGHDYLREDDVAPAQIVEISLTESWIKDWLVRLMAGRLRSLVPAARHERYFICRRAQLPFTVRESLELGNLYTGYVLVVDPQLKIRWMACGGAEKRDAELLWKCVRGVQRECAAV.

It belongs to the ATP10 family.

The protein localises to the mitochondrion inner membrane. Involved in assembly of the mitochondrial F1-F0 complex. The protein is Mitochondrial ATPase complex subunit ATP10 (ATP10) of Eremothecium gossypii (strain ATCC 10895 / CBS 109.51 / FGSC 9923 / NRRL Y-1056) (Yeast).